The chain runs to 204 residues: Large ribosomal subunit protein eL15 (204 aa).

It belongs to the eukaryotic ribosomal protein eL15 family. Component of the large ribosomal subunit.

The protein localises to the cytoplasm. Its function is as follows. Component of the large ribosomal subunit. The ribosome is a large ribonucleoprotein complex responsible for the synthesis of proteins in the cell. This Silurus meridionalis (Southern catfish) protein is Large ribosomal subunit protein eL15 (rpl15).